Here is a 335-residue protein sequence, read N- to C-terminus: Tetraacyldisaccharide 4'-kinase (335 aa).

58–65 (TVGGSGKT) is a binding site for ATP.

The protein belongs to the LpxK family.

The catalysed reaction is a lipid A disaccharide + ATP = a lipid IVA + ADP + H(+). It functions in the pathway glycolipid biosynthesis; lipid IV(A) biosynthesis; lipid IV(A) from (3R)-3-hydroxytetradecanoyl-[acyl-carrier-protein] and UDP-N-acetyl-alpha-D-glucosamine: step 6/6. In terms of biological role, transfers the gamma-phosphate of ATP to the 4'-position of a tetraacyldisaccharide 1-phosphate intermediate (termed DS-1-P) to form tetraacyldisaccharide 1,4'-bis-phosphate (lipid IVA). In Shewanella oneidensis (strain ATCC 700550 / JCM 31522 / CIP 106686 / LMG 19005 / NCIMB 14063 / MR-1), this protein is Tetraacyldisaccharide 4'-kinase.